The primary structure comprises 248 residues: Indole-3-glycerol phosphate synthase (248 aa).

It belongs to the TrpC family.

It catalyses the reaction 1-(2-carboxyphenylamino)-1-deoxy-D-ribulose 5-phosphate + H(+) = (1S,2R)-1-C-(indol-3-yl)glycerol 3-phosphate + CO2 + H2O. It participates in amino-acid biosynthesis; L-tryptophan biosynthesis; L-tryptophan from chorismate: step 4/5. This chain is Indole-3-glycerol phosphate synthase, found in Sulfolobus acidocaldarius (strain ATCC 33909 / DSM 639 / JCM 8929 / NBRC 15157 / NCIMB 11770).